The following is a 450-amino-acid chain: Tubulin alpha chain (450 aa).

Gln11 serves as a coordination point for GTP. Lys40 carries the N6-acetyllysine modification. GTP is bound by residues Glu71, Gly144, Thr145, Thr179, Asn206, and Asn228. Glu71 lines the Mg(2+) pocket. The active site involves Glu254.

The protein belongs to the tubulin family. In terms of assembly, dimer of alpha and beta chains. A typical microtubule is a hollow water-filled tube with an outer diameter of 25 nm and an inner diameter of 15 nM. Alpha-beta heterodimers associate head-to-tail to form protofilaments running lengthwise along the microtubule wall with the beta-tubulin subunit facing the microtubule plus end conferring a structural polarity. Microtubules usually have 13 protofilaments but different protofilament numbers can be found in some organisms and specialized cells. It depends on Mg(2+) as a cofactor. Undergoes a tyrosination/detyrosination cycle, the cyclic removal and re-addition of a C-terminal tyrosine residue by the enzymes tubulin tyrosine carboxypeptidase (TTCP) and tubulin tyrosine ligase (TTL), respectively. Post-translationally, acetylation of alpha chains at Lys-40 stabilizes microtubules and affects affinity and processivity of microtubule motors. This modification has a role in multiple cellular functions, ranging from cell motility, cell cycle progression or cell differentiation to intracellular trafficking and signaling.

It is found in the cytoplasm. It localises to the cytoskeleton. It carries out the reaction GTP + H2O = GDP + phosphate + H(+). Its function is as follows. Tubulin is the major constituent of microtubules, a cylinder consisting of laterally associated linear protofilaments composed of alpha- and beta-tubulin heterodimers. Microtubules grow by the addition of GTP-tubulin dimers to the microtubule end, where a stabilizing cap forms. Below the cap, tubulin dimers are in GDP-bound state, owing to GTPase activity of alpha-tubulin. The chain is Tubulin alpha chain (TUBA) from Prunus dulcis (Almond).